The sequence spans 384 residues: Probable tRNA sulfurtransferase (384 aa).

Positions 57–160 constitute a THUMP domain; that stretch reads EEVVDRVRNV…KKTYIYSKRI (104 aa). ATP contacts are provided by residues 177-178, 202-203, arginine 259, glycine 281, and glutamine 290; these read ML and YF.

Belongs to the ThiI family.

The protein resides in the cytoplasm. The enzyme catalyses [ThiI sulfur-carrier protein]-S-sulfanyl-L-cysteine + a uridine in tRNA + 2 reduced [2Fe-2S]-[ferredoxin] + ATP + H(+) = [ThiI sulfur-carrier protein]-L-cysteine + a 4-thiouridine in tRNA + 2 oxidized [2Fe-2S]-[ferredoxin] + AMP + diphosphate. It carries out the reaction [ThiS sulfur-carrier protein]-C-terminal Gly-Gly-AMP + S-sulfanyl-L-cysteinyl-[cysteine desulfurase] + AH2 = [ThiS sulfur-carrier protein]-C-terminal-Gly-aminoethanethioate + L-cysteinyl-[cysteine desulfurase] + A + AMP + 2 H(+). It participates in cofactor biosynthesis; thiamine diphosphate biosynthesis. Catalyzes the ATP-dependent transfer of a sulfur to tRNA to produce 4-thiouridine in position 8 of tRNAs, which functions as a near-UV photosensor. Also catalyzes the transfer of sulfur to the sulfur carrier protein ThiS, forming ThiS-thiocarboxylate. This is a step in the synthesis of thiazole, in the thiamine biosynthesis pathway. The sulfur is donated as persulfide by IscS. The polypeptide is Probable tRNA sulfurtransferase (Clostridium acetobutylicum (strain ATCC 824 / DSM 792 / JCM 1419 / IAM 19013 / LMG 5710 / NBRC 13948 / NRRL B-527 / VKM B-1787 / 2291 / W)).